The chain runs to 227 residues: MTKNEYLIEKLQVDLANHITELTSAYGEVTIECEVQNLLPVMIELRDREEFSFDELIDLCGVDYLHYGDYDWETESATEHGFSRGVERQEAKAYAVNKPRFAVVYHLLSTKKNHRLRVKLFVEESHLIVPSVHHLWKSANWFEREAYDLYGILFDGHPDLRRLLTDYGFIGHPFRKDFPLSGEVEMRYDAKLQKVIYAPVDIVPRIVVPKVIRNDNRYIGNEGSKND.

It belongs to the complex I 30 kDa subunit family. As to quaternary structure, NDH-1 is composed of 14 different subunits. Subunits NuoB, C, D, E, F, and G constitute the peripheral sector of the complex.

It localises to the cell inner membrane. It carries out the reaction a quinone + NADH + 5 H(+)(in) = a quinol + NAD(+) + 4 H(+)(out). Functionally, NDH-1 shuttles electrons from NADH, via FMN and iron-sulfur (Fe-S) centers, to quinones in the respiratory chain. The immediate electron acceptor for the enzyme in this species is believed to be ubiquinone. Couples the redox reaction to proton translocation (for every two electrons transferred, four hydrogen ions are translocated across the cytoplasmic membrane), and thus conserves the redox energy in a proton gradient. The polypeptide is NADH-quinone oxidoreductase subunit C (Legionella pneumophila (strain Lens)).